We begin with the raw amino-acid sequence, 584 residues long: A-type ATP synthase subunit A (584 aa).

Residue 233–240 (GPFGSGKT) coordinates ATP.

The protein belongs to the ATPase alpha/beta chains family. As to quaternary structure, has multiple subunits with at least A(3), B(3), C, D, E, F, H, I and proteolipid K(x).

The protein localises to the cell membrane. The catalysed reaction is ATP + H2O + 4 H(+)(in) = ADP + phosphate + 5 H(+)(out). In terms of biological role, component of the A-type ATP synthase that produces ATP from ADP in the presence of a proton gradient across the membrane. The A chain is the catalytic subunit. The polypeptide is A-type ATP synthase subunit A (Methanothermobacter thermautotrophicus (strain ATCC 29096 / DSM 1053 / JCM 10044 / NBRC 100330 / Delta H) (Methanobacterium thermoautotrophicum)).